The following is a 163-amino-acid chain: Putative H/ACA ribonucleoprotein complex subunit 2-like protein (163 aa).

It belongs to the eukaryotic ribosomal protein eL8 family. In terms of assembly, component of the small nucleolar ribonucleoprotein particle containing H/ACA-type snoRNAs (H/ACA snoRNPs).

It is found in the nucleus. Its subcellular location is the nucleolus. Functionally, required for ribosome biogenesis. Part of a complex which catalyzes pseudouridylation of rRNA. This involves the isomerization of uridine such that the ribose is subsequently attached to C5, instead of the normal N1. Pseudouridine ('psi') residues may serve to stabilize the conformation of rRNAs. The chain is Putative H/ACA ribonucleoprotein complex subunit 2-like protein from Caenorhabditis briggsae.